The chain runs to 199 residues: UPF0637 protein LACR_1918 (199 aa).

It belongs to the UPF0637 family.

The chain is UPF0637 protein LACR_1918 from Lactococcus lactis subsp. cremoris (strain SK11).